The chain runs to 746 residues: Rhizobactin receptor (746 aa).

The N-terminal stretch at 1–26 (MGNNENGGISFCVFVVVIGFGTGAVA) is a signal peptide. Positions 40–47 (EEIVVTGG) match the TonB box motif. The TBDR plug domain maps to 52–163 (QISEIARTIY…TGGIINIITK (112 aa)). The region spanning 169–746 (EPGLHAEVTG…TFAVSLTKVF (578 aa)) is the TBDR beta-barrel domain. The TonB C-terminal box signature appears at 729–746 (FDYKGRGRTFAVSLTKVF).

The protein belongs to the TonB-dependent receptor family.

The protein resides in the cell outer membrane. Receptor for the siderophore rhizobactin. The chain is Rhizobactin receptor (rhtA) from Rhizobium meliloti (strain 1021) (Ensifer meliloti).